The chain runs to 452 residues: Keratin, type II cytoskeletal 80 (452 aa).

The interval 1 to 82 is head; sequence MAYRSCVVGF…DPAVQQQKNQ (82 aa). A Phosphoserine modification is found at S45. Positions 82–118 are coil 1A; it reads QEKEEMKALNDKFASLIGKVQALEQRNQLLETRWSFL. The 312-residue stretch at 83–394 folds into the IF rod domain; that stretch reads EKEEMKALND…KLMEGEESRM (312 aa). Residues 119 to 135 are linker 1; the sequence is QGQGSATFDLSHHYETF. Residues 136 to 227 form a coil 1B region; that stretch reads QGRLQEELRK…TVYEQELKDL (92 aa). The segment at 228-251 is linker 12; sequence TAQVKDVSVTVGLDSRCHIDLSGI. Positions 252 to 390 are coil 2; that stretch reads VEEVKAQYDA…ATYHKLMEGE (139 aa). The tract at residues 391-452 is tail; it reads ESRMDLPSAT…YLSQESEASE (62 aa). A disordered region spans residues 412 to 452; it reads TASKSGLTKTSSRKKKNRRGPVIKITEMSEKYLSQESEASE. Over residues 422–432 the composition is skewed to basic residues; that stretch reads SSRKKKNRRGP. A compositionally biased stretch (polar residues) spans 443–452; sequence YLSQESEASE.

It belongs to the intermediate filament family. As to quaternary structure, heterotetramer of two type I and two type II keratins.

The polypeptide is Keratin, type II cytoskeletal 80 (Krt80) (Mus musculus (Mouse)).